The chain runs to 495 residues: Carbohydrate oxidase (495 aa).

An N-terminal signal peptide occupies residues 1-22; sequence MRSAFILALGLITASADALVTR. The region spanning 55 to 229 is the FAD-binding PCMH-type domain; that stretch reads LPYIPTAIAQ…AVWKLATFPA (175 aa). Positions 92–154 form a cross-link, 6-(S-cysteinyl)-8alpha-(pros-histidyl)-FAD (His-Cys); it reads HSYASFGFGG…YGRAISHGTC (63 aa). 2 N-linked (GlcNAc...) asparagine glycosylation sites follow: asparagine 244 and asparagine 417.

This sequence belongs to the oxygen-dependent FAD-linked oxidoreductase family. Requires FAD as cofactor. In terms of processing, the FAD cofactor is bound via a bicovalent 6-S-cysteinyl, 8alpha-N1-histidyl FAD linkage.

It localises to the secreted. It catalyses the reaction beta-D-glucose + O2 = D-glucono-1,5-lactone + H2O2. The enzyme catalyses D-galactose + O2 = D-galactono-1,5-lactone + H2O2. It carries out the reaction D-cellobiose + O2 = D-cellobiono-1,5-lactone + H2O2. The catalysed reaction is beta-lactose + O2 = lactobiono-1,5-lactone + H2O2. It catalyses the reaction D-maltose + O2 = D-maltobiono-1,5-lactone + H2O2. The enzyme catalyses D-xylose + O2 = D-xylono-1,5-lactone + H2O2. In terms of biological role, catalyzes the selective oxidation of C1 hydroxyl moieties on mono-, oligo- and polysaccharides with concomitant reduction of molecular oxygen to hydrogen peroxide. This results in the formation of the corresponding lactones, which typically undergo spontaneous hydrolysis. Carbohydrate oxidase is able to oxidize a variety of substrates including D-glucose, D-galactose, D-xylose, D-maltose, D-cellobiose, and lactose. In addition, among various oligosaccharides, the enzyme preferred tetrameric dextrins, indicating a favorable interaction of four linked glucose units with the substrate binding pocket. The protein is Carbohydrate oxidase of Microdochium nivale (Pink snow mold).